The primary structure comprises 165 residues: Bark lectin isoform 1 (165 aa).

N-linked (GlcNAc...) asparagine glycans are attached at residues asparagine 27 and asparagine 57. Intrachain disulfides connect cysteine 33-cysteine 80 and cysteine 126-cysteine 133.

This sequence belongs to the protease inhibitor I3 (leguminous Kunitz-type inhibitor) family. As to quaternary structure, dimer.

Its function is as follows. Glucose and N-acetylglucosamine binding lectin. Has hemagglutinating activity against human and rabbit erythrocytes which does not require divalent cations. Inhibits factor Xa and, to a lesser extent, trypsin. Does not inhibit neutrophil elastase, human plasma kallikrein, papain, human plasmin, porcine pancreatic kallikrein and bovin chymotrypsin. Has insecticidal activity against the termite species N.corniger. Induces apoptosis in prostrate cancer cell lines DU145 and PC3. In Crateva tapia (Garlic-pear tree), this protein is Bark lectin isoform 1.